A 497-amino-acid chain; its full sequence is Cobyric acid synthase (497 aa).

The GATase cobBQ-type domain occupies 250 to 445 (EVTIAVIRLP…LHGIFNNGPW (196 aa)). The Nucleophile role is filled by Cys-331. His-437 is an active-site residue.

Belongs to the CobB/CobQ family. CobQ subfamily.

The protein operates within cofactor biosynthesis; adenosylcobalamin biosynthesis. Its function is as follows. Catalyzes amidations at positions B, D, E, and G on adenosylcobyrinic A,C-diamide. NH(2) groups are provided by glutamine, and one molecule of ATP is hydrogenolyzed for each amidation. This chain is Cobyric acid synthase, found in Acaryochloris marina (strain MBIC 11017).